Reading from the N-terminus, the 139-residue chain is S-adenosylmethionine decarboxylase proenzyme (139 aa).

S63 acts as the Schiff-base intermediate with substrate; via pyruvic acid in catalysis. The residue at position 63 (S63) is a Pyruvic acid (Ser); by autocatalysis. H68 serves as the catalytic Proton acceptor; for processing activity. Residue C83 is the Proton donor; for catalytic activity of the active site.

It belongs to the prokaryotic AdoMetDC family. Type 1 subfamily. As to quaternary structure, heterotetramer of two alpha and two beta chains arranged as a dimer of alpha/beta heterodimers. It depends on pyruvate as a cofactor. Post-translationally, is synthesized initially as an inactive proenzyme. Formation of the active enzyme involves a self-maturation process in which the active site pyruvoyl group is generated from an internal serine residue via an autocatalytic post-translational modification. Two non-identical subunits are generated from the proenzyme in this reaction, and the pyruvate is formed at the N-terminus of the alpha chain, which is derived from the carboxyl end of the proenzyme. The post-translation cleavage follows an unusual pathway, termed non-hydrolytic serinolysis, in which the side chain hydroxyl group of the serine supplies its oxygen atom to form the C-terminus of the beta chain, while the remainder of the serine residue undergoes an oxidative deamination to produce ammonia and the pyruvoyl group blocking the N-terminus of the alpha chain.

The enzyme catalyses S-adenosyl-L-methionine + H(+) = S-adenosyl 3-(methylsulfanyl)propylamine + CO2. Its pathway is amine and polyamine biosynthesis; S-adenosylmethioninamine biosynthesis; S-adenosylmethioninamine from S-adenosyl-L-methionine: step 1/1. In terms of biological role, catalyzes the decarboxylation of S-adenosylmethionine to S-adenosylmethioninamine (dcAdoMet), the propylamine donor required for the synthesis of the polyamines spermine and spermidine from the diamine putrescine. This is S-adenosylmethionine decarboxylase proenzyme from Pyrococcus abyssi (strain GE5 / Orsay).